Here is a 732-residue protein sequence, read N- to C-terminus: Interleukin-31 receptor subunit alpha (732 aa).

The N-terminal stretch at 1–19 (MMWTWALWMLPSLCKFSLA) is a signal peptide. Over 20-519 (ALPAKPENIS…FKTLSFSVFE (500 aa)) the chain is Extracellular. 5 Fibronectin type-III domains span residues 24–122 (KPEN…IAKT), 124–225 (PPKI…TEEE), 223–315 (EEEA…PVAT), 319–416 (PAIQ…QAYA), and 421–515 (PSEG…TLSF). N37, N67, N93, N166, N187, N277, N283, N395, N455, and N504 each carry an N-linked (GlcNAc...) asparagine glycan. Residues 520-540 (IILITSLIGGGLLILIILTVA) traverse the membrane as a helical segment. At 541–732 (YGLKKPNKLT…KLPEHTKGEV (192 aa)) the chain is on the cytoplasmic side.

It belongs to the type I cytokine receptor family. Type 2 subfamily. In terms of assembly, heterodimer with OSMR. Interacts with JAK1 and STAT3. N-glycosylated. Expressed in CD14- and CD56-positive blood cells. Expressed in macrophages. Expressed in keratinocytes. Expressed in a subset of dorsal root ganglia neurons (at protein level). Expressed at low levels in testis, ovary, brain, prostate, placenta, thymus, bone marrow, trachea and skin. Expressed in bronchial and alveolar epithelial cells and pulmonary fibroblasts. Detected in all of the myelomonocytic lineage. Isoform 6: Expressed at higher levels in lesional skin compared to healthy skin of atopic dermatitis patients.

Its subcellular location is the cell membrane. The protein resides in the presynaptic cell membrane. It localises to the cell projection. The protein localises to the axon. Functionally, associates with OSMR to form the interleukin-31 receptor which activates STAT3 and to a lower extent STAT1 and STAT5. May function in skin immunity. Mediates IL31-induced itch, probably in a manner dependent on cation channels TRPA1 and TRPV1. Positively regulates numbers and cycling status of immature subsets of myeloid progenitor cells in bone marrow in vivo and enhances myeloid progenitor cell survival in vitro. This is Interleukin-31 receptor subunit alpha (IL31RA) from Homo sapiens (Human).